The primary structure comprises 114 residues: Large ribosomal subunit protein uL22 (114 aa).

The protein belongs to the universal ribosomal protein uL22 family. As to quaternary structure, part of the 50S ribosomal subunit.

Its function is as follows. This protein binds specifically to 23S rRNA; its binding is stimulated by other ribosomal proteins, e.g. L4, L17, and L20. It is important during the early stages of 50S assembly. It makes multiple contacts with different domains of the 23S rRNA in the assembled 50S subunit and ribosome. Functionally, the globular domain of the protein is located near the polypeptide exit tunnel on the outside of the subunit, while an extended beta-hairpin is found that lines the wall of the exit tunnel in the center of the 70S ribosome. The chain is Large ribosomal subunit protein uL22 from Methylacidiphilum infernorum (isolate V4) (Methylokorus infernorum (strain V4)).